Consider the following 404-residue polypeptide: Acetate kinase (404 aa).

Asparagine 7 contacts Mg(2+). Residue lysine 14 coordinates ATP. Residue arginine 91 participates in substrate binding. Residue aspartate 148 is the Proton donor/acceptor of the active site. ATP is bound by residues 208–212 and 283–285; these read HLGNG and DLR. Glutamate 388 contacts Mg(2+).

It belongs to the acetokinase family. In terms of assembly, homodimer. The cofactor is Mg(2+). Mn(2+) serves as cofactor.

The protein resides in the cytoplasm. It carries out the reaction acetate + ATP = acetyl phosphate + ADP. The protein operates within metabolic intermediate biosynthesis; acetyl-CoA biosynthesis; acetyl-CoA from acetate: step 1/2. In terms of biological role, catalyzes the formation of acetyl phosphate from acetate and ATP. Can also catalyze the reverse reaction. The protein is Acetate kinase of Borrelia turicatae (strain 91E135).